A 298-amino-acid chain; its full sequence is MLYQQISQNKQGTVVLLVVFFALLALIGASAGYLLLDNYAMGLVLALVIGVIYATSMIFQSTSLVMSMNNAREVTEKEAPGFFHIVEDMAMVAQIPMPRVFIIEDPSLNAFATGSSPQNAAVAATTGLLEVMNREELEGVIGHEISHIRNYDIRISTIAVALASAVTVISSIGGRMLWYGGGSRRQRDDGDDDVLRIITLLLSLLSLLLAPLVASLIQLAISRQREYLADASSVELTRNPQGMIKALEKLQLSQPMKHPVDDASAALYINEPRKKRSFSSLFSTHPPIEERIERLKNM.

2 helical membrane-spanning segments follow: residues Val-14 to Leu-34 and Tyr-39 to Phe-59. Residue His-143 coordinates Zn(2+). Glu-144 is an active-site residue. His-147 contacts Zn(2+). A run of 2 helical transmembrane segments spans residues Ile-158 to Trp-178 and Ile-197 to Ile-217. Glu-226 contributes to the Zn(2+) binding site.

Belongs to the peptidase M48B family. Zn(2+) serves as cofactor.

The protein resides in the cell membrane. The sequence is that of Protease HtpX homolog from Streptococcus pyogenes serotype M6 (strain ATCC BAA-946 / MGAS10394).